Consider the following 144-residue polypeptide: uncharacterized protein (144 aa).

Residues 1-58 enclose the HTH lysR-type domain; the sequence is MDLASLNAFIAVAETGSFSEAGERLHLTQPAVSKRIAALEQQLQVRLFDRLGREVRLT. Positions 18-38 form a DNA-binding region, H-T-H motif; the sequence is FSEAGERLHLTQPAVSKRIAA.

The protein belongs to the LysR transcriptional regulatory family.

This is an uncharacterized protein from Azotobacter vinelandii.